The sequence spans 443 residues: Methyl-coenzyme M reductase II subunit beta (443 aa).

Y367 contacts coenzyme M. Coenzyme B is bound at residue G369.

It belongs to the methyl-coenzyme M reductase beta subunit family. As to quaternary structure, MCR is a hexamer of two alpha, two beta, and two gamma chains, forming a dimer of heterotrimers. It depends on coenzyme F430 as a cofactor.

The catalysed reaction is coenzyme B + methyl-coenzyme M = methane + coenzyme M-coenzyme B heterodisulfide. Its pathway is one-carbon metabolism; methyl-coenzyme M reduction; methane from methyl-coenzyme M: step 1/1. In terms of biological role, component of the methyl-coenzyme M reductase (MCR) I that catalyzes the reductive cleavage of methyl-coenzyme M (CoM-S-CH3 or 2-(methylthio)ethanesulfonate) using coenzyme B (CoB or 7-mercaptoheptanoylthreonine phosphate) as reductant which results in the production of methane and the mixed heterodisulfide of CoB and CoM (CoM-S-S-CoB). This is the final step in methanogenesis. This is Methyl-coenzyme M reductase II subunit beta from Methanothermobacter marburgensis (strain ATCC BAA-927 / DSM 2133 / JCM 14651 / NBRC 100331 / OCM 82 / Marburg) (Methanobacterium thermoautotrophicum).